A 399-amino-acid chain; its full sequence is Tetracycline resistance protein, class A (399 aa).

Transmembrane regions (helical) follow at residues 7–29, 44–66, 73–95, 99–121, 133–155, 160–182, 203–225, 245–267, 279–298, 302–324, 336–358, and 368–390; these read LIVI…PVLP, HYGI…LGAL, RPVL…TAPF, LYIG…AYIA, FGFM…GLMG, HAPF…FLLP, FRWA…MQLV, ATTI…AMIT, ALML…AFAT, MAFP…QAML, LQGS…FTAI, and GWAW…RGLW.

It belongs to the major facilitator superfamily. TCR/Tet family.

It localises to the cell inner membrane. In terms of biological role, resistance to tetracycline by an active tetracycline efflux. This is an energy-dependent process that decreases the accumulation of the antibiotic in whole cells. This protein functions as a metal-tetracycline/H(+) antiporter. This chain is Tetracycline resistance protein, class A (tetA), found in Escherichia coli.